A 242-amino-acid chain; its full sequence is Ribonuclease 3 (242 aa).

Residues 18-146 enclose the RNase III domain; sequence APAIEAKLGY…IIGAIYLDGG (129 aa). A Mg(2+)-binding site is contributed by E59. The active site involves D63. Residues D132 and E135 each contribute to the Mg(2+) site. E135 is an active-site residue. Residues 172-241 enclose the DRBM domain; sequence NWKALLQDYC…AADALSRVEL (70 aa). Over residues 218–227 the composition is skewed to basic and acidic residues; the sequence is RGKGTSKKEA. The tract at residues 218–242 is disordered; that stretch reads RGKGTSKKEAQQAAAADALSRVELP.

The protein belongs to the ribonuclease III family. As to quaternary structure, homodimer. It depends on Mg(2+) as a cofactor.

Its subcellular location is the cytoplasm. The catalysed reaction is Endonucleolytic cleavage to 5'-phosphomonoester.. Its function is as follows. Digests double-stranded RNA. Involved in the processing of primary rRNA transcript to yield the immediate precursors to the large and small rRNAs (23S and 16S). Processes some mRNAs, and tRNAs when they are encoded in the rRNA operon. Processes pre-crRNA and tracrRNA of type II CRISPR loci if present in the organism. This Protochlamydia amoebophila (strain UWE25) protein is Ribonuclease 3.